The chain runs to 806 residues: Glycerol-3-phosphate acyltransferase (806 aa).

An HXXXXD motif motif is present at residues 305-310 (CHRSHM).

The protein belongs to the GPAT/DAPAT family.

Its subcellular location is the cell inner membrane. It catalyses the reaction sn-glycerol 3-phosphate + an acyl-CoA = a 1-acyl-sn-glycero-3-phosphate + CoA. It participates in phospholipid metabolism; CDP-diacylglycerol biosynthesis; CDP-diacylglycerol from sn-glycerol 3-phosphate: step 1/3. In Salmonella arizonae (strain ATCC BAA-731 / CDC346-86 / RSK2980), this protein is Glycerol-3-phosphate acyltransferase.